A 46-amino-acid polypeptide reads, in one-letter code: Apamin (46 aa).

A signal peptide spans 1–27; it reads MISMLRCIYLFLSVILITSYFVTPVMP. Disulfide bonds link cysteine 28-cysteine 38 and cysteine 30-cysteine 42. Residues 40-41 form an essential for toxin activity region; it reads RR. Position 45 is a histidine amide (histidine 45).

As to expression, expressed by the venom gland.

It is found in the secreted. Functionally, toxin with unique selectivity to KCa2 channels. Potently blocks human, rat and mouse KCa2.2/KCNN2/SK2 channels (IC(50)=27-140 pM), and moderately blocks human and rat KCa2.3/KCNN3/SK3 channels (IC(50)=0.6-4 nM), and human (IC(50)=0.7-12 nM) and mouse (IC(50)=28 nM) KCa2.1/KCNN1/SK1 channels. Does not show any antimicrobial activity. In vivo, intracerebroventricular injection into rats of a dose of 1 ng results in neurodegeneration specifically in the Purkinje cells of the cerebellum, and induces seizures characterized by hypersensitivity to noise, loss of postural control, paroxystic jerking, and alternating periods of great agitation with tonic-clonic convulsions and periods of total prostration. When administered at high doses, exerts anti-inflammatory, anti-oxidative, anti-fibrotic and anti-apoptotic properties in several models of inflammatory disease, including gouty arthritis, atherosclerosis, atopic dermatitis and acute kidney injury. Down-regulates pro-inflammatory signaling pathways, such as the NF-kappaB and STAT3 pathways, probably by blocking SK channels such as KCa2.2/KCNN2/SK2 and/or KCa2.3/KCNN3/SK3 which are thought to be involved in promoting some inflammatory responses. For example in mouse and rat microglia cells, inhibits LPS-activated KCa2.2/KCNN2/SK2 channels and TLR4 expression leading to the down-regulation of the NF-kappaB, STAT, and MAPK/ERK signaling pathways and, as a consequence, decreases secretion of pro-inflammatory cytokines. The chain is Apamin from Apis mellifera (Honeybee).